The following is a 198-amino-acid chain: Large ribosomal subunit protein uL5 (198 aa).

The protein belongs to the universal ribosomal protein uL5 family. Part of the 50S ribosomal subunit; part of the 5S rRNA/L5/L18/L25 subcomplex. Contacts the 5S rRNA and the P site tRNA. Forms a bridge to the 30S subunit in the 70S ribosome.

This is one of the proteins that bind and probably mediate the attachment of the 5S RNA into the large ribosomal subunit, where it forms part of the central protuberance. In the 70S ribosome it contacts protein S13 of the 30S subunit (bridge B1b), connecting the 2 subunits; this bridge is implicated in subunit movement. Contacts the P site tRNA; the 5S rRNA and some of its associated proteins might help stabilize positioning of ribosome-bound tRNAs. The protein is Large ribosomal subunit protein uL5 of Chlorobium phaeovibrioides (strain DSM 265 / 1930) (Prosthecochloris vibrioformis (strain DSM 265)).